Consider the following 282-residue polypeptide: Acyl-CoA-binding domain-containing protein 6 (282 aa).

Residues 1–34 (MATPFLPAGATTGDSGGELSSGDDSGDLESFQTP) are disordered. Residue Ser41 is modified to Phosphoserine. The ACB domain occupies 42–127 (LAELFEKAAA…VKKLDPGWNP (86 aa)). Residues 69–73 (YARYK) and Lys95 each bind an acyl-CoA. Ser106 carries the post-translational modification Phosphoserine. Tyr114 is a binding site for an acyl-CoA. ANK repeat units follow at residues 191-220 (EGRA…GINC) and 224-253 (EGQT…DPTL).

As to quaternary structure, monomer.

The protein resides in the cytoplasm. The protein localises to the nucleus. In terms of biological role, binds long-chain acyl-coenzyme A molecules with a strong preference for unsaturated C18:1-CoA, lower affinity for unsaturated C20:4-CoA, and very weak affinity for saturated C16:0-CoA. Does not bind fatty acids. Plays a role in protein N-myristoylation. In Rattus norvegicus (Rat), this protein is Acyl-CoA-binding domain-containing protein 6 (Acbd6).